Reading from the N-terminus, the 346-residue chain is Cell division protein ZipA (346 aa).

Residues 1–6 (MEDLQL) lie on the Periplasmic side of the membrane. The chain crosses the membrane as a helical span at residues 7-27 (VLFVLGAIAIVAVLVHGFWSI). The Cytoplasmic segment spans residues 28 to 346 (RRQQPKSLKD…DYLHRIRANA (319 aa)). Disordered regions lie at residues 76–103 (ANEA…QPVE) and 121–145 (QPDF…RQEP).

This sequence belongs to the ZipA family. As to quaternary structure, interacts with FtsZ via their C-terminal domains.

The protein localises to the cell inner membrane. In terms of biological role, essential cell division protein that stabilizes the FtsZ protofilaments by cross-linking them and that serves as a cytoplasmic membrane anchor for the Z ring. Also required for the recruitment to the septal ring of downstream cell division proteins. This is Cell division protein ZipA from Shewanella sp. (strain MR-4).